Consider the following 270-residue polypeptide: Protein tonB2 (270 aa).

Topologically, residues 1-51 (MATPQPVDARTQPWRETPGGDLVALGRPVRQALHLVRHNPAQGRVLSRRET) are cytoplasmic. Residues 52–69 (ILLVLFALTLHGAVIHWL) form a helical membrane-spanning segment. The Periplasmic portion of the chain corresponds to 70–270 (SQQRTPALPE…VSVPIDFKLN (201 aa)). The segment at 80-187 (VPPQVPPMTI…LTPPSANAGY (108 aa)) is disordered. Residues 94-118 (PAPPVVEPPPPEPLPPVVEEPPPPV) are compositionally biased toward pro residues. A compositionally biased stretch (basic residues) spans 133–143 (PKPKPKPKPQP). Residues 144-180 (RPKPAPKAVEPAPPAPPQPAAPPAPPAPAAAPAPLTP) are compositionally biased toward pro residues. One can recognise a TonB C-terminal domain in the interval 180-270 (PPSANAGYLH…VSVPIDFKLN (91 aa)).

Belongs to the TonB family. Homodimer. Forms a complex with the accessory proteins ExbB and ExbD.

The protein resides in the cell inner membrane. In terms of biological role, interacts with outer membrane receptor proteins that carry out high-affinity binding and energy dependent uptake into the periplasmic space of specific substrates. It could act to transduce energy from the cytoplasmic membrane to specific energy-requiring processes in the outer membrane, resulting in the release into the periplasm of ligands bound by these outer membrane proteins. This chain is Protein tonB2 (tonB2), found in Pseudomonas aeruginosa (strain ATCC 15692 / DSM 22644 / CIP 104116 / JCM 14847 / LMG 12228 / 1C / PRS 101 / PAO1).